Consider the following 1518-residue polypeptide: Putative cellulose synthase 2 (1518 aa).

The interval 1 to 731 (MYGTWFTTGK…EEKLEKQSFV (731 aa)) is catalytic. 3 helical membrane-spanning segments follow: residues 24-44 (PVWV…SVRI), 71-91 (ITVF…VWRL), and 105-125 (LAVL…LSYF). The segment at 144 to 237 (QWPSVDVFVP…FAVIFDCDHV (94 aa)) is catalytic subdomain A. Aspartate 186 is a catalytic residue. Substrate-binding residues include aspartate 233 and aspartate 235. The tract at residues 314 to 374 (EAVMGIGGFA…GQRVRWARGM (61 aa)) is catalytic subdomain B. Aspartate 330 is a catalytic residue. 5 helical membrane-spanning segments follow: residues 404–424 (FLFA…LFLG), 427–447 (IIAA…FHSV), 465–485 (IYET…LLQP), 514–534 (ILAG…VWQF), and 543–563 (FILN…SIAV). The region spanning 569-668 (QTRNAPRVSV…ERQVVSMVFG (100 aa)) is the PilZ domain. The cyclic di-GMP binding domain stretch occupies residues 732-1518 (LKPVPRSARH…IARDDLTGEL (787 aa)). The segment at 765-785 (APSPDQSGVTAETPFGDSNTG) is disordered. The span at 768-785 (PDQSGVTAETPFGDSNTG) shows a compositional bias: polar residues. Residues 1481–1501 (ALYLAGLAGAGLAALGVWAWL) form a helical membrane-spanning segment.

This sequence in the N-terminal section; belongs to the glycosyltransferase 2 family. In the C-terminal section; belongs to the AcsB/BcsB family.

It localises to the cell inner membrane. It carries out the reaction [(1-&gt;4)-beta-D-glucosyl](n) + UDP-alpha-D-glucose = [(1-&gt;4)-beta-D-glucosyl](n+1) + UDP + H(+). It functions in the pathway glycan metabolism; bacterial cellulose biosynthesis. The sequence is that of Putative cellulose synthase 2 (bcsABII-A) from Komagataeibacter xylinus (Gluconacetobacter xylinus).